Consider the following 101-residue polypeptide: NADH-quinone oxidoreductase subunit K (101 aa).

3 helical membrane-spanning segments follow: residues 4–24 (LAHF…GIFL), 30–50 (IVLL…FVAF), and 61–81 (VFVF…LAIL).

This sequence belongs to the complex I subunit 4L family. In terms of assembly, NDH-1 is composed of 14 different subunits. Subunits NuoA, H, J, K, L, M, N constitute the membrane sector of the complex.

Its subcellular location is the cell inner membrane. It carries out the reaction a quinone + NADH + 5 H(+)(in) = a quinol + NAD(+) + 4 H(+)(out). Functionally, NDH-1 shuttles electrons from NADH, via FMN and iron-sulfur (Fe-S) centers, to quinones in the respiratory chain. The immediate electron acceptor for the enzyme in this species is believed to be ubiquinone. Couples the redox reaction to proton translocation (for every two electrons transferred, four hydrogen ions are translocated across the cytoplasmic membrane), and thus conserves the redox energy in a proton gradient. The polypeptide is NADH-quinone oxidoreductase subunit K (Cupriavidus necator (strain ATCC 17699 / DSM 428 / KCTC 22496 / NCIMB 10442 / H16 / Stanier 337) (Ralstonia eutropha)).